The sequence spans 360 residues: D-alanine--D-alanine ligase (360 aa).

Residues 134-343 (KILAQRVGVP…YTELITRLIE (210 aa)) enclose the ATP-grasp domain. 169-224 (AEKLGRDMFVKPSNQGSSVGVSHVTNADEYAAALKEAFKYDDKVLVEETVPGTEVE) contacts ATP. Residues aspartate 297, glutamate 310, and asparagine 312 each contribute to the Mg(2+) site.

It belongs to the D-alanine--D-alanine ligase family. The cofactor is Mg(2+). Mn(2+) serves as cofactor.

Its subcellular location is the cytoplasm. The enzyme catalyses 2 D-alanine + ATP = D-alanyl-D-alanine + ADP + phosphate + H(+). It functions in the pathway cell wall biogenesis; peptidoglycan biosynthesis. In terms of biological role, cell wall formation. In Lactobacillus helveticus (strain DPC 4571), this protein is D-alanine--D-alanine ligase.